The primary structure comprises 695 residues: Probable Rho-GTPase-activating protein 7 (695 aa).

Residues 1-11 (MLSAPSSSTTP) are compositionally biased toward low complexity. The tract at residues 1–26 (MLSAPSSSTTPASPPTSPPNTTSSDD) is disordered. Residues 33 to 307 (PKVEAILNSE…ALDNINANTD (275 aa)) enclose the F-BAR domain. The segment at 320–499 (EDNKNPTDAS…SVSPQPSSPT (180 aa)) is disordered. 2 stretches are compositionally biased toward polar residues: residues 336–348 (PPSS…SAGK) and 366–382 (PLQN…NPSV). Composition is skewed to low complexity over residues 383–432 (ASPA…RTSS), 458–467 (PIQTTTIQTS), and 488–499 (PTSVSPQPSSPT). 2 positions are modified to phosphoserine: serine 496 and serine 497. A Rho-GAP domain is found at 506-692 (ARLDAIILRE…ILIDYCFTIF (187 aa)).

The sequence is that of Probable Rho-GTPase-activating protein 7 (rga7) from Schizosaccharomyces pombe (strain 972 / ATCC 24843) (Fission yeast).